A 391-amino-acid chain; its full sequence is Stearoyl-[acyl-carrier-protein] 9-desaturase 6, chloroplastic (391 aa).

The transit peptide at 1–38 (MLAHKSLLSFTTQWATLMPSPSTFLASRPRGPAKISAV) directs the protein to the chloroplast. Fe cation-binding residues include Glu-130, Glu-168, His-171, Glu-221, Glu-254, and His-257.

It belongs to the fatty acid desaturase type 2 family. As to quaternary structure, homodimer. It depends on Fe(2+) as a cofactor.

The protein localises to the plastid. The protein resides in the chloroplast. The enzyme catalyses octadecanoyl-[ACP] + 2 reduced [2Fe-2S]-[ferredoxin] + O2 + 2 H(+) = (9Z)-octadecenoyl-[ACP] + 2 oxidized [2Fe-2S]-[ferredoxin] + 2 H2O. Its pathway is lipid metabolism; fatty acid metabolism. Its function is as follows. Converts stearoyl-ACP to oleoyl-ACP by introduction of a cis double bond between carbons 9 and 10 of the acyl chain. This is Stearoyl-[acyl-carrier-protein] 9-desaturase 6, chloroplastic (S-ACP-DES6) from Arabidopsis thaliana (Mouse-ear cress).